Consider the following 111-residue polypeptide: Disintegrin piscivostatin-alpha (111 aa).

Residues 1–20 (MIQVLLVTICLAVFPYQGSS) form the signal peptide. The propeptide occupies 21–44 (IILESGNVNDYEVVYPRKITPLPK). Residues 45–111 (GAVQPKNPCC…GDCPRKHFYA (67 aa)) form the Disintegrin domain. 4 cysteine pairs are disulfide-bonded: C53–C76, C67–C73, C72–C97, and C85–C104. The Cell attachment site motif lies at 89 to 91 (RGD). Residues 110 to 111 (YA) constitute a propeptide that is removed on maturation.

This sequence belongs to the disintegrin family. Dimeric disintegrin subfamily. In terms of assembly, heterodimer with piscivostatin-beta; disulfide-linked. Expressed by the venom gland.

It is found in the secreted. Inhibits fibrinogen interaction with platelets. Acts by binding to alpha-IIb/beta-3 (ITGA2B/ITGB3) on the platelet surface and inhibits both ADP-induced platelet aggregation and platelet aggregate dissociation in human platelet-rich plasma. This chain is Disintegrin piscivostatin-alpha, found in Agkistrodon piscivorus piscivorus (Eastern cottonmouth).